A 207-amino-acid chain; its full sequence is Venom allergen 5 (207 aa).

Cystine bridges form between cysteine 4–cysteine 16, cysteine 8–cysteine 105, and cysteine 29–cysteine 97. The SCP domain maps to 49–192 (DEHNRFRQKV…MKSHYLVCNY (144 aa)). Tyrosine 111 is modified (phosphotyrosine). Lysine 141 carries an N-linked (Glc) (glycation) lysine glycan. A disulfide bridge connects residues cysteine 173 and cysteine 190.

Belongs to the CRISP family. Venom allergen 5-like subfamily. In terms of processing, glycosylated. Expressed by the venom gland.

The protein resides in the secreted. This Polybia paulista (Neotropical social wasp) protein is Venom allergen 5.